A 708-amino-acid polypeptide reads, in one-letter code: Nicastrin (708 aa).

A signal peptide spans 1 to 34 (MATARGGSGPDPGSRGLLLLSFSVVLAGLCGGNS). At 35–668 (VERKIYIPLN…IFLIASKELE (634 aa)) the chain is on the lumenal side. N-linked (GlcNAc...) asparagine glycans are attached at residues Asn-44, Asn-54, and Asn-128. Cys-49 and Cys-61 are joined by a disulfide. Cys-139 and Cys-158 are oxidised to a cystine. Residues Asn-186 and Asn-203 are each glycosylated (N-linked (GlcNAc...) asparagine). 2 cysteine pairs are disulfide-bonded: Cys-194-Cys-212 and Cys-229-Cys-247. Residues Asn-263, Asn-386, Asn-434, Asn-463, Asn-507, Asn-529, Asn-561, Asn-572, Asn-579, Asn-593, and Asn-611 are each glycosylated (N-linked (GlcNAc...) asparagine). A disulfide bridge connects residues Cys-585 and Cys-619. A helical transmembrane segment spans residues 669–689 (FITLIVGFSILVFSLIVTYCI). The Cytoplasmic portion of the chain corresponds to 690-708 (NAKADVLFVAPREPGAVSY).

It belongs to the nicastrin family. Component of the gamma-secretase complex. The functional gamma-secretase complex is composed of at least four polypeptides: a presenilin homodimer (PSEN1 or PSEN2), nicastrin (NCSTN), APH1 (APH1A or APH1B) and PEN2. Binds to proteolytic processed C-terminal fragments C83 and C99 of the amyloid precursor protein (APP). Interacts with PSEN1 and PSEN2. In terms of processing, N-glycosylated.

It localises to the membrane. It is found in the cytoplasmic vesicle membrane. Its subcellular location is the melanosome. In terms of biological role, essential subunit of the gamma-secretase complex, an endoprotease complex that catalyzes the intramembrane cleavage of integral membrane proteins such as Notch receptors and APP (amyloid-beta precursor protein). The gamma-secretase complex plays a role in Notch and Wnt signaling cascades and regulation of downstream processes via its role in processing key regulatory proteins, and by regulating cytosolic CTNNB1 levels. The protein is Nicastrin (Ncstn) of Rattus norvegicus (Rat).